Here is a 105-residue protein sequence, read N- to C-terminus: Heat shock protein HspQ (105 aa).

The disordered stretch occupies residues 80 to 105 (AHPEQPSLDELAASIRHQLQAPHLRN).

The protein belongs to the HspQ family.

It localises to the cytoplasm. In terms of biological role, involved in the degradation of certain denaturated proteins, including DnaA, during heat shock stress. This chain is Heat shock protein HspQ, found in Yersinia pseudotuberculosis serotype O:1b (strain IP 31758).